Here is a 264-residue protein sequence, read N- to C-terminus: Thymidylate synthase (264 aa).

A dUMP-binding site is contributed by Arg-21. His-51 is a (6R)-5,10-methylene-5,6,7,8-tetrahydrofolate binding site. 126–127 (RR) serves as a coordination point for dUMP. Catalysis depends on Cys-146, which acts as the Nucleophile. Residues 166-169 (RSAD), Asn-177, and 207-209 (HLY) each bind dUMP. (6R)-5,10-methylene-5,6,7,8-tetrahydrofolate is bound at residue Asp-169. Ala-263 is a (6R)-5,10-methylene-5,6,7,8-tetrahydrofolate binding site.

The protein belongs to the thymidylate synthase family. Bacterial-type ThyA subfamily. Homodimer.

Its subcellular location is the cytoplasm. The catalysed reaction is dUMP + (6R)-5,10-methylene-5,6,7,8-tetrahydrofolate = 7,8-dihydrofolate + dTMP. Its pathway is pyrimidine metabolism; dTTP biosynthesis. Its function is as follows. Catalyzes the reductive methylation of 2'-deoxyuridine-5'-monophosphate (dUMP) to 2'-deoxythymidine-5'-monophosphate (dTMP) while utilizing 5,10-methylenetetrahydrofolate (mTHF) as the methyl donor and reductant in the reaction, yielding dihydrofolate (DHF) as a by-product. This enzymatic reaction provides an intracellular de novo source of dTMP, an essential precursor for DNA biosynthesis. This chain is Thymidylate synthase, found in Nitrosomonas eutropha (strain DSM 101675 / C91 / Nm57).